A 242-amino-acid chain; its full sequence is Lactate utilization protein A 1 (242 aa).

The protein belongs to the LutA/YkgE family.

Its function is as follows. Is involved in L-lactate degradation and allows cells to grow with lactate as the sole carbon source. This chain is Lactate utilization protein A 1, found in Bacillus anthracis (strain CDC 684 / NRRL 3495).